The following is a 122-amino-acid chain: Small ribosomal subunit protein bS6 (122 aa).

It belongs to the bacterial ribosomal protein bS6 family.

In terms of biological role, binds together with bS18 to 16S ribosomal RNA. This is Small ribosomal subunit protein bS6 from Neisseria meningitidis serogroup C (strain 053442).